An 88-amino-acid polypeptide reads, in one-letter code: Conotoxin MaIr34 (88 aa).

An N-terminal signal peptide occupies residues 1-21 (MKLTCVIVAVLFLTAWTFVMA). Positions 22–53 (DDPRDGPDTAVRGGKRFWKARNEMNSAASKLN) are excised as a propeptide. 3 disulfide bridges follow: C57–C75, C64–C79, and C74–C83.

The protein belongs to the conotoxin O1 superfamily. In terms of tissue distribution, expressed by the venom duct.

It localises to the secreted. The protein is Conotoxin MaIr34 of Conus marmoreus (Marble cone).